Reading from the N-terminus, the 535-residue chain is Probable C4-dicarboxylate sensor kinase (535 aa).

Residues 1 to 11 (MNKKKLSIRWK) lie on the Cytoplasmic side of the membrane. Residues 12–32 (ITILSYILVIFSFLIGGIVLI) traverse the membrane as a helical segment. The Extracellular portion of the chain corresponds to 33–172 (GNIQHTEERE…IADILLHLKR (140 aa)). A helical membrane pass occupies residues 173 to 193 (DIAFIVVLTLGFGLAGSFLLA). Topologically, residues 194–535 (RHIKKQMFQL…MKGEEAQHGS (342 aa)) are cytoplasmic. One can recognise a PAS domain in the interval 213 to 276 (EERTATFHSM…PEIVERNKAV (64 aa)). The 196-residue stretch at 333-528 (VQNHEHMNKL…SFSIVFPMKG (196 aa)) folds into the Histidine kinase domain. At His336 the chain carries Phosphohistidine; by autocatalysis.

It is found in the cell membrane. The catalysed reaction is ATP + protein L-histidine = ADP + protein N-phospho-L-histidine.. Functionally, member of the two-component regulatory system DctS/DctR. Probably activates DctR by phosphorylation. Essential for expression of dctP. This is Probable C4-dicarboxylate sensor kinase (dctS) from Bacillus subtilis (strain 168).